The following is a 189-amino-acid chain: Ribosomal RNA large subunit methyltransferase E (189 aa).

S-adenosyl-L-methionine is bound by residues Gly-45, Phe-47, Asp-64, Asp-82, and Asp-104. The Proton acceptor role is filled by Lys-144.

It belongs to the class I-like SAM-binding methyltransferase superfamily. RNA methyltransferase RlmE family.

It is found in the cytoplasm. The enzyme catalyses uridine(2552) in 23S rRNA + S-adenosyl-L-methionine = 2'-O-methyluridine(2552) in 23S rRNA + S-adenosyl-L-homocysteine + H(+). Functionally, specifically methylates the uridine in position 2552 of 23S rRNA at the 2'-O position of the ribose in the fully assembled 50S ribosomal subunit. This Borreliella afzelii (strain PKo) (Borrelia afzelii) protein is Ribosomal RNA large subunit methyltransferase E.